A 398-amino-acid chain; its full sequence is Maltoporin (398 aa).

A signal peptide spans 1–30; that stretch reads MTDKNNKRLFKVAPLATAIAASLFTVNASA.

The protein belongs to the porin LamB (TC 1.B.3) family. In terms of assembly, homotrimer formed of three 18-stranded antiparallel beta-barrels, containing three independent channels.

The protein localises to the cell outer membrane. The catalysed reaction is beta-maltose(in) = beta-maltose(out). Functionally, involved in the transport of maltose and maltodextrins. The sequence is that of Maltoporin from Hahella chejuensis (strain KCTC 2396).